The chain runs to 244 residues: Uridylate kinase (244 aa).

15–18 (KLSG) is a binding site for ATP. An involved in allosteric activation by GTP region spans residues 23-28 (GSEGFG). A UMP-binding site is contributed by G57. 2 residues coordinate ATP: G58 and R62. UMP is bound by residues D77 and 138 to 145 (TGNPFFTT). 3 residues coordinate ATP: T165, F171, and D174.

This sequence belongs to the UMP kinase family. As to quaternary structure, homohexamer.

The protein resides in the cytoplasm. The enzyme catalyses UMP + ATP = UDP + ADP. It participates in pyrimidine metabolism; CTP biosynthesis via de novo pathway; UDP from UMP (UMPK route): step 1/1. Its activity is regulated as follows. Allosterically activated by GTP. Inhibited by UTP. Functionally, catalyzes the reversible phosphorylation of UMP to UDP. The chain is Uridylate kinase from Aeromonas salmonicida (strain A449).